The primary structure comprises 154 residues: MGTNKIPKTLNGNLVLILIITIMMVTHSHGFQLEIRNELSGRYRKLVYKCWSRDNDFGWRQNWPGQYKDWSFAISLFHTYFYCHFRTAYGRVDKQLVASWELKQECGDRRKCTWVVKKDGLYLRQWKTKFFSNKYGNERWNVYIEHDVLKKSWS.

A signal peptide spans 1-30 (MGTNKIPKTLNGNLVLILIITIMMVTHSHG).

The protein belongs to the plant self-incompatibility (S1) protein family.

The protein localises to the secreted. The sequence is that of S-protein homolog 12 from Arabidopsis thaliana (Mouse-ear cress).